A 728-amino-acid polypeptide reads, in one-letter code: Diacylglycerol kinase 1 (728 aa).

A helical membrane pass occupies residues 27–48 (GLMFSCFVAALVGILTIAYTAF). 2 consecutive Phorbol-ester/DAG-type zinc fingers follow at residues 79-137 (PHSW…PKDC) and 149-212 (VHQW…GDIC). Disordered stretches follow at residues 265–296 (KQTN…PTVN) and 308–336 (VMNG…TGSF). Residues 267–294 (TNETSADTGNSGSNCDESTESTADTGPT) are compositionally biased toward polar residues. Residues 310-319 (NGDSSNGDSD) are compositionally biased toward low complexity. A DAGKc domain is found at 357-496 (SDARPLLVFI…LDRWKVSILN (140 aa)). Residues K491 and K500 each participate in a glycyl lysine isopeptide (Lys-Gly) (interchain with G-Cter in ubiquitin) cross-link.

It belongs to the eukaryotic diacylglycerol kinase family. As to quaternary structure, monomer. As to expression, expressed in roots, shoots, and leaves.

The protein resides in the membrane. The enzyme catalyses a 1,2-diacyl-sn-glycerol + ATP = a 1,2-diacyl-sn-glycero-3-phosphate + ADP + H(+). Its function is as follows. Phosphorylates the second messenger diacylglycerol (DAG) to generate phosphatidic acid (PA), another important signaling molecule. PA is required for plant development and responses to abiotic stress and pathogen attack. May be involved in the accumulation of PA during cold stress. The sequence is that of Diacylglycerol kinase 1 (DGK1) from Arabidopsis thaliana (Mouse-ear cress).